Here is a 994-residue protein sequence, read N- to C-terminus: Sarcoplasmic/endoplasmic reticulum calcium ATPase 1 (994 aa).

Residues 1–48 (MENAHAKTAEECLAFFGVNESVGLSGEQVRRALEKYGHNELPAEEGKT) lie on the Cytoplasmic side of the membrane. A helical membrane pass occupies residues 49 to 69 (IWELVVEQFEDLLVRILLLAA). The Lumenal segment spans residues 70–89 (CISFVLAWFEEGEETITAFV). Residues 90–110 (EPFVILLILIANAVVGVWQER) form a helical membrane-spanning segment. The Cytoplasmic portion of the chain corresponds to 111–253 (NAENAIEALK…QDKTPLQQKL (143 aa)). The helical transmembrane segment at 254 to 273 (DEFGEQLSKVISLICVAVWL) threads the bilayer. Topologically, residues 274–295 (INIGHFNDPVHGGSWIRGAIYY) are lumenal. A helical transmembrane segment spans residues 296-313 (FKIAVALAVAAIPEGLPA). The Ca(2+) site is built by Val304, Ala305, Ile307, and Glu309. Topologically, residues 314–757 (VITTCLALGT…EEGRAIYNNM (444 aa)) are cytoplasmic. Catalysis depends on Asp351, which acts as the 4-aspartylphosphate intermediate. Positions 351 and 353 each coordinate Mg(2+). 10 residues coordinate ATP: Thr353, Glu442, Arg489, Lys515, Arg560, Thr625, Gly626, Asp627, Arg678, and Lys684. Asp703 is a Mg(2+) binding site. Asn706 is a binding site for ATP. A helical membrane pass occupies residues 758–777 (KQFIRYLISSNVGEVVCIFL). Ca(2+) contacts are provided by Asn768 and Glu771. Over 778-787 (TAALGLPEAL) the chain is Lumenal. The chain crosses the membrane as a helical span at residues 788-808 (IPVQLLWVNLVTDGLPATALG). The tract at residues 788 to 808 (IPVQLLWVNLVTDGLPATALG) is interaction with PLN. Residues Asn796, Thr799, and Asp800 each contribute to the Ca(2+) site. Over 809 to 828 (FNPPDLDIMDKPPRSPKEPL) the chain is Cytoplasmic. A helical membrane pass occupies residues 829–851 (ISGWLFFRYLAIGGYVGAATVGA). At 852-897 (AAWWFLYAEDGPSLTYHQLTHFMQCTHHNAEFEGVDCDIFESPVPM) the chain is on the lumenal side. An intrachain disulfide couples Cys876 to Cys888. The helical transmembrane segment at 898-917 (TMALSVLVTIEMCNALNSLS) threads the bilayer. Ca(2+) is bound at residue Glu908. Residues 918 to 930 (ENQSLLRMPPWVN) lie on the Cytoplasmic side of the membrane. The chain crosses the membrane as a helical span at residues 931 to 949 (IWLVGSICLSMSLHFVILY). The segment at 932 to 943 (WLVGSICLSMSL) is interaction with PLN. Residues 950 to 964 (VDPLPMIFKLTHLDL) lie on the Lumenal side of the membrane. The chain crosses the membrane as a helical span at residues 965 to 985 (AHWLVVLRISFPVILLDEALK). At 986–994 (FVARNYLEA) the chain is on the cytoplasmic side.

Belongs to the cation transport ATPase (P-type) (TC 3.A.3) family. Type IIA subfamily. As to quaternary structure, interacts with sarcolipin (SLN). Interacts with phospholamban (PLN). Interacts with myoregulin (MRLN). Interacts with DWORF. The cofactor is Mg(2+).

It is found in the endoplasmic reticulum membrane. It localises to the sarcoplasmic reticulum membrane. It catalyses the reaction Ca(2+)(in) + ATP + H2O = Ca(2+)(out) + ADP + phosphate + H(+). Inhibited by sarcolipin (SLN) and myoregulin (MRLN). Also shown to be inhibited by phospholamban (PLN) in vitro. Enhanced by DWORF; DWORF increases activity by displacing sarcolipin (SLN), phospholamban (PLN) and myoregulin (MRLN). Key regulator of striated muscle performance by acting as the major Ca(2+) ATPase responsible for the reuptake of cytosolic Ca(2+) into the sarcoplasmic reticulum. Catalyzes the hydrolysis of ATP coupled with the translocation of calcium from the cytosol to the sarcoplasmic reticulum lumen. Contributes to calcium sequestration involved in muscular excitation/contraction. The chain is Sarcoplasmic/endoplasmic reticulum calcium ATPase 1 (ATP2A1) from Gallus gallus (Chicken).